The sequence spans 314 residues: Solute carrier family 25 member 44 (314 aa).

Solcar repeat units follow at residues 18–100 (KKFY…TRKF), 107–210 (SNTV…YAEQ), and 220–302 (PHIV…LKKL). 6 helical membrane passes run 20 to 42 (FYVFGVAMTMMIRVSVYPFTLIR), 71 to 90 (TGLYRGFLVNTFTLISGQCY), 113 to 133 (LVAGGSASLVAQSITVPIDVV), 185 to 201 (GYVASLLTYIPNSAVWW), 222 to 239 (IVFQAVSGPLAAATASIL), and 278 to 296 (LSARIISATPSTIVIVVGY).

It belongs to the mitochondrial carrier (TC 2.A.29) family.

It is found in the mitochondrion membrane. It catalyses the reaction L-valine(in) = L-valine(out). The enzyme catalyses L-leucine(in) = L-leucine(out). Mitochondrial solute transporter which transports branched-chain amino acid (BCAA; valine, leucine and isoleucine) into mitochondria in brown adipose tissue (BAT). BAT is involved in BCAA catabolism and actively utilizes BCAA in the mitochondria for thermogenesis. The sequence is that of Solute carrier family 25 member 44 from Homo sapiens (Human).